The primary structure comprises 130 residues: Small ribosomal subunit protein uS11c (130 aa).

This sequence belongs to the universal ribosomal protein uS11 family. In terms of assembly, part of the 30S ribosomal subunit.

The protein localises to the plastid. Its subcellular location is the chloroplast. The polypeptide is Small ribosomal subunit protein uS11c (Tetradesmus obliquus (Green alga)).